A 333-amino-acid chain; its full sequence is Pantothenate synthetase (333 aa).

Residue Met27–His34 participates in ATP binding. His34 serves as the catalytic Proton donor. Gln61 provides a ligand contact to (R)-pantoate. Gln61 contacts beta-alanine. ATP is bound at residue Gly148–Asp151. Gln154 serves as a coordination point for (R)-pantoate. ATP-binding positions include Val177 and Leu185–Arg188.

The protein belongs to the pantothenate synthetase family. Homodimer.

The protein resides in the cytoplasm. The catalysed reaction is (R)-pantoate + beta-alanine + ATP = (R)-pantothenate + AMP + diphosphate + H(+). It functions in the pathway cofactor biosynthesis; (R)-pantothenate biosynthesis; (R)-pantothenate from (R)-pantoate and beta-alanine: step 1/1. In terms of biological role, catalyzes the condensation of pantoate with beta-alanine in an ATP-dependent reaction via a pantoyl-adenylate intermediate. The protein is Pantothenate synthetase of Streptomyces avermitilis (strain ATCC 31267 / DSM 46492 / JCM 5070 / NBRC 14893 / NCIMB 12804 / NRRL 8165 / MA-4680).